The chain runs to 213 residues: Alkylbase DNA glycosidase-like protein mag2 (213 aa).

Residues lysine 53, leucine 54, serine 61, histidine 91, glycine 94, serine 96, lysine 97, lysine 99, glutamate 102, lysine 137, glycine 138, lysine 140, threonine 143, serine 163, and threonine 164 each coordinate DNA.

This sequence belongs to the alkylbase DNA glycosidase AlkA family.

The protein resides in the nucleus. Its function is as follows. Alkylbase DNA glycosidase-like protein that shows no DNA glycosylase activity for alkylated bases. The molecular role of mag2 appears to be abasic (AP) site recognition and protection, while possibly facilitating damage signaling by structurally sculpting the DNA substrate. Stimulates AP site binding to mismatch repair protein mutS. The protein is Alkylbase DNA glycosidase-like protein mag2 of Schizosaccharomyces pombe (strain 972 / ATCC 24843) (Fission yeast).